Consider the following 158-residue polypeptide: Transcription antitermination protein NusB (158 aa).

Residues 1-12 (MKRVEKRAEKQG) are compositionally biased toward basic and acidic residues. The segment at 1–20 (MKRVEKRAEKQGRGTARKSR) is disordered.

Belongs to the NusB family.

Involved in transcription antitermination. Required for transcription of ribosomal RNA (rRNA) genes. Binds specifically to the boxA antiterminator sequence of the ribosomal RNA (rrn) operons. The chain is Transcription antitermination protein NusB from Nitrosospira multiformis (strain ATCC 25196 / NCIMB 11849 / C 71).